We begin with the raw amino-acid sequence, 280 residues long: Energy-coupling factor transporter ATP-binding protein EcfA1 (280 aa).

One can recognise an ABC transporter domain in the interval 6-244 (IECKNVVYKY…VPLMKNIGLD (239 aa)). 43–50 (GHNGSGKS) lines the ATP pocket.

The protein belongs to the ABC transporter superfamily. Energy-coupling factor EcfA family. Forms a stable energy-coupling factor (ECF) transporter complex composed of 2 membrane-embedded substrate-binding proteins (S component), 2 ATP-binding proteins (A component) and 2 transmembrane proteins (T component).

It localises to the cell membrane. Its function is as follows. ATP-binding (A) component of a common energy-coupling factor (ECF) ABC-transporter complex. Unlike classic ABC transporters this ECF transporter provides the energy necessary to transport a number of different substrates. The polypeptide is Energy-coupling factor transporter ATP-binding protein EcfA1 (Clostridium novyi (strain NT)).